A 108-amino-acid polypeptide reads, in one-letter code: Cytochrome c6 (108 aa).

An N-terminal signal peptide occupies residues 1-23; that stretch reads MRLLFAFFIICHIFTNNVQLTFA. Heme c-binding residues include Cys-37, Cys-40, His-41, and Met-81.

It belongs to the cytochrome c family. PetJ subfamily. Monomer. Post-translationally, binds 1 heme c group covalently per subunit.

The protein resides in the plastid. It is found in the chloroplast thylakoid lumen. Functions as an electron carrier between membrane-bound cytochrome b6-f and photosystem I in oxygenic photosynthesis. The protein is Cytochrome c6 of Gracilaria tenuistipitata var. liui (Red alga).